We begin with the raw amino-acid sequence, 178 residues long: Extracellular fatty acid-binding protein (178 aa).

A signal peptide spans 1-20 (MRTLALSLGLALLCLLHAKA). Residue Thr43 coordinates enterobactin. Residues Tyr72 and Lys104 each coordinate 1-tetradecanoyl-sn-glycerol 3-phosphate. The cysteines at positions 80 and 173 are disulfide-linked. Residues Lys104, Arg123, and Arg134 each coordinate enterobactin. 134–136 (RLY) is a binding site for 1-tetradecanoyl-sn-glycerol 3-phosphate.

This sequence belongs to the calycin superfamily. Lipocalin family. Monomer.

It localises to the secreted. In terms of biological role, siderocalin-like lipocalin tightly binding a variety of bacterial ferric siderophores, also binds long-chain unsaturated fatty acids such as linoleic acid, oleic acid, arachidonic acid and, with a lower affinity, long chain saturated fatty acids such as steraic acid. May act as an antibacterial factor, through dual ligand specificity, both as a siderophore-sequestrating molecule and a lysophosphatidic acid (LPA) sensor. In Coturnix japonica (Japanese quail), this protein is Extracellular fatty acid-binding protein.